The sequence spans 129 residues: Small ribosomal subunit protein uS11 (129 aa).

It belongs to the universal ribosomal protein uS11 family. As to quaternary structure, part of the 30S ribosomal subunit. Interacts with proteins S7 and S18. Binds to IF-3.

Functionally, located on the platform of the 30S subunit, it bridges several disparate RNA helices of the 16S rRNA. Forms part of the Shine-Dalgarno cleft in the 70S ribosome. In Azoarcus sp. (strain BH72), this protein is Small ribosomal subunit protein uS11.